We begin with the raw amino-acid sequence, 641 residues long: MTTLSTIWLFLITITAIFQLGLSSNVTTIIDDDNNNNNNNNNNADDFLEPQIETIKVIGNKFFECESGHQFFIKGIAYQKTRQEGEIYDTTKEPHYIDPLANPFTCLRDLDYLKELGINLVRVYQIHPNANHDVCMNAFAEAGIYVLADLSEPTISIRRDYPHWDTEIFNRYQQVIDSMSNYKNLLGFFAGNEVTNCQSNIDASPFVRAAIRDCKKYINQQGYRKIPIGYASNDDANIRKNLANYFVCQLDEDEDKGQEHLNSQADFFAINVYEWCGYSTYTTSGYRDLTTMFKDYSVPVFFSEFGCNIITPRPFTEVEAIYGSTMKKVWSGGIAYEYFEEVNHYGILLTKKDGSITKLPDFDTLKMRFHAATPIGITMDEATICEPPICSNSVIDDKSSSSSSSSSFWDVALTLPPTPNEAKCECLWQSLSCVVSEDATFDEEVALRELCFKVDCEDINANGRSGKYGRYSDCNPTVRTSYALNKYYEQCGKKQEICDFQGRGELLPNRNGGLQDLENKFSSDGQNCLSLLEGKEEEKEVQEEEPDVPGLPGSNKGKEVESTPKRKGKGKSKEKEKGKLIEEEEEEEEEEEENNKTPSSGEKSPKTSKSIAGGNAITFKNDSIWKTFIEILFTCSAAILI.

The N-terminal stretch at Met1–Ser23 is a signal peptide. An N-linked (GlcNAc...) asparagine glycan is attached at Asn25. Cys106 and Cys135 are oxidised to a cystine. Residues Tyr124, Asn192, Glu193, Asp234, and Arg239 each coordinate (1,3-beta-D-glucosyl)n. The active-site Proton donor is Glu193. Intrachain disulfides connect Cys248/Cys390, Cys276/Cys307, Cys424/Cys474, Cys426/Cys528, Cys433/Cys498, and Cys451/Cys456. Glu304 (nucleophile) is an active-site residue. Tyr336 lines the (1,3-beta-D-glucosyl)n pocket. The interval Lys535–Gly613 is disordered. The span at Lys571–Ile581 shows a compositional bias: basic and acidic residues. Positions Glu582–Glu593 are enriched in acidic residues. Over residues Lys596 to Ser610 the composition is skewed to polar residues. The N-linked (GlcNAc...) asparagine glycan is linked to Asn621. The GPI-anchor amidated aspartate moiety is linked to residue Asp622. The propeptide at Ser623–Ile641 is removed in mature form.

This sequence belongs to the glycosyl hydrolase 72 family.

It localises to the cell membrane. Functionally, splits internally a 1,3-beta-glucan molecule and transfers the newly generated reducing end (the donor) to the non-reducing end of another 1,3-beta-glucan molecule (the acceptor) forming a 1,3-beta linkage, resulting in the elongation of 1,3-beta-glucan chains in the cell wall. Involved in spore wall assembly. In Candida albicans (strain SC5314 / ATCC MYA-2876) (Yeast), this protein is 1,3-beta-glucanosyltransferase PGA5 (PGA5).